Reading from the N-terminus, the 507-residue chain is MQQRYILALDQGTTSCRAILFDHQAQIVGVAQKELTQYYPQPGWVEHDAMEIWGAQMGVVREVLEVHGVKPAELHAIGITNQRETTVLWDRHTGRPVHNAIVWQDRRTAPLCESLKERGLEQQVRETTGLVIDAYFSATKIRWLLDNVPGVRERAEQGELLFGTMDTWLVWNLTRGACHVTDYSNASRTMLYDIHRLAWDEGLLEALDIPRSLLPEVRPSCGSFGTTHPEMLGGAQIPIAGIAGDQQAALFGQACFEPGMAKNTYGTGCFLLMHSGERPAVSESGLLTTIAWGIDGRVEYALEGAIFIAGAAIQWLRDELKLIDSAEDSEYFAGKVPDAGGVYVVPAFAGLGAPYWDMYARGAIFGLTRGTRKEHITRATLDALAYQTKDVIDAMGRDAGVPLKALRVDGGAAANNVLMQFQADLLGVRVERPPVIETTALGAAYLAGIAVGIWDQAAVAHQTAPERVFEPSMEDDERDRLYRGWQKAVRRSMDWERESDGGVQQSE.

Position 13 (threonine 13) interacts with ADP. The ATP site is built by threonine 13, threonine 14, and serine 15. Threonine 13 is a sn-glycerol 3-phosphate binding site. Position 17 (arginine 17) interacts with ADP. Sn-glycerol 3-phosphate is bound by residues arginine 83, glutamate 84, tyrosine 135, and aspartate 245. Residues arginine 83, glutamate 84, tyrosine 135, aspartate 245, and glutamine 246 each contribute to the glycerol site. The ADP site is built by threonine 267 and glycine 310. ATP contacts are provided by threonine 267, glycine 310, glutamine 314, and glycine 411. 2 residues coordinate ADP: glycine 411 and asparagine 415.

It belongs to the FGGY kinase family.

It catalyses the reaction glycerol + ATP = sn-glycerol 3-phosphate + ADP + H(+). It participates in polyol metabolism; glycerol degradation via glycerol kinase pathway; sn-glycerol 3-phosphate from glycerol: step 1/1. With respect to regulation, inhibited by fructose 1,6-bisphosphate (FBP). Functionally, key enzyme in the regulation of glycerol uptake and metabolism. Catalyzes the phosphorylation of glycerol to yield sn-glycerol 3-phosphate. This Halorhodospira halophila (strain DSM 244 / SL1) (Ectothiorhodospira halophila (strain DSM 244 / SL1)) protein is Glycerol kinase.